A 537-amino-acid chain; its full sequence is Zinc metalloproteinase nas-23 (537 aa).

Residues 1–16 form the signal peptide; the sequence is MRFLILVLAGSIGIYG. The propeptide occupies 17 to 111; that stretch reads VNLPKIPKLS…EQLDHSRTKR (95 aa). N-linked (GlcNAc...) asparagine glycosylation is present at Asn77. The region spanning 116-311 is the Peptidase M12A domain; sequence NAMYPKTIWL…AKINRHYNCE (196 aa). Disulfide bonds link Cys156–Cys310, Cys178–Cys199, Cys314–Cys334, Cys336–Cys345, Cys356–Cys385, and Cys412–Cys433. His207 contacts Zn(2+). The active site involves Glu208. Zn(2+) is bound by residues His211 and His217. In terms of domain architecture, EGF-like spans 306–346; that stretch reads RHYNCEKNCKNKITCLNGGYQHPKNCKICVCPPGYGGSDCK. Positions 356–471 constitute a CUB domain; sequence CTGVLVAGET…VQLRYSTVDG (116 aa). An N-linked (GlcNAc...) asparagine glycan is attached at Asn481.

Requires Zn(2+) as cofactor. In terms of tissue distribution, expressed in the hypodermis, rectum and to a lesser extent in pharyngeal muscles and intestine.

Its subcellular location is the secreted. Its function is as follows. Metalloprotease. The polypeptide is Zinc metalloproteinase nas-23 (nas-23) (Caenorhabditis elegans).